Here is a 417-residue protein sequence, read N- to C-terminus: UDP-N-acetylglucosamine 1-carboxyvinyltransferase (417 aa).

Residue 22-23 (KN) coordinates phosphoenolpyruvate. Residue arginine 91 participates in UDP-N-acetyl-alpha-D-glucosamine binding. Catalysis depends on cysteine 115, which acts as the Proton donor. The residue at position 115 (cysteine 115) is a 2-(S-cysteinyl)pyruvic acid O-phosphothioketal. UDP-N-acetyl-alpha-D-glucosamine is bound by residues 120 to 124 (RPVDL), aspartate 304, and isoleucine 326.

This sequence belongs to the EPSP synthase family. MurA subfamily.

It localises to the cytoplasm. It carries out the reaction phosphoenolpyruvate + UDP-N-acetyl-alpha-D-glucosamine = UDP-N-acetyl-3-O-(1-carboxyvinyl)-alpha-D-glucosamine + phosphate. It participates in cell wall biogenesis; peptidoglycan biosynthesis. In terms of biological role, cell wall formation. Adds enolpyruvyl to UDP-N-acetylglucosamine. The protein is UDP-N-acetylglucosamine 1-carboxyvinyltransferase of Nitratidesulfovibrio vulgaris (strain ATCC 29579 / DSM 644 / CCUG 34227 / NCIMB 8303 / VKM B-1760 / Hildenborough) (Desulfovibrio vulgaris).